The chain runs to 314 residues: Homoserine kinase (314 aa).

95–105 contributes to the ATP binding site; the sequence is PHSRGLGSSAA.

Belongs to the GHMP kinase family. Homoserine kinase subfamily.

The protein localises to the cytoplasm. It catalyses the reaction L-homoserine + ATP = O-phospho-L-homoserine + ADP + H(+). Its pathway is amino-acid biosynthesis; L-threonine biosynthesis; L-threonine from L-aspartate: step 4/5. Catalyzes the ATP-dependent phosphorylation of L-homoserine to L-homoserine phosphate. This chain is Homoserine kinase, found in Mycobacterium sp. (strain KMS).